A 267-amino-acid polypeptide reads, in one-letter code: Diphthine--ammonia ligase (267 aa).

The residue at position 97 (tyrosine 97) is a Phosphotyrosine.

It belongs to the Diphthine--ammonia ligase family.

The catalysed reaction is diphthine-[translation elongation factor 2] + NH4(+) + ATP = diphthamide-[translation elongation factor 2] + AMP + diphosphate + H(+). The protein operates within protein modification; peptidyl-diphthamide biosynthesis. Amidase that may catalyze the last step of diphthamide biosynthesis using ammonium and ATP. Diphthamide biosynthesis consists in the conversion of an L-histidine residue in the translation elongation factor (EEF2) to diphthamide. The chain is Diphthine--ammonia ligase from Homo sapiens (Human).